Consider the following 106-residue polypeptide: Iron-sulfur cluster assembly protein CyaY (106 aa).

This sequence belongs to the frataxin family.

Its function is as follows. Involved in iron-sulfur (Fe-S) cluster assembly. May act as a regulator of Fe-S biogenesis. This chain is Iron-sulfur cluster assembly protein CyaY, found in Escherichia coli (strain SMS-3-5 / SECEC).